The following is a 248-amino-acid chain: DNA-directed RNA polymerase subunit Rpo3 (248 aa).

This sequence belongs to the archaeal Rpo3/eukaryotic RPB3 RNA polymerase subunit family. In terms of assembly, part of the RNA polymerase complex.

It is found in the cytoplasm. It carries out the reaction RNA(n) + a ribonucleoside 5'-triphosphate = RNA(n+1) + diphosphate. Functionally, DNA-dependent RNA polymerase (RNAP) catalyzes the transcription of DNA into RNA using the four ribonucleoside triphosphates as substrates. The sequence is that of DNA-directed RNA polymerase subunit Rpo3 from Halobacterium salinarum (strain ATCC 29341 / DSM 671 / R1).